Consider the following 192-residue polypeptide: Thymidine kinase (192 aa).

Residues 9-16 (SAMNAGKT) and 88-91 (DECH) each bind ATP. Residue Glu89 is the Proton acceptor of the active site. Zn(2+)-binding residues include Cys146, Cys148, Cys183, and His186.

The protein belongs to the thymidine kinase family. Homotetramer.

It localises to the cytoplasm. It carries out the reaction thymidine + ATP = dTMP + ADP + H(+). This Blochmanniella floridana protein is Thymidine kinase.